The primary structure comprises 900 residues: Alanine--tRNA ligase (900 aa).

Positions 604, 608, 708, and 712 each coordinate Zn(2+).

It belongs to the class-II aminoacyl-tRNA synthetase family. Zn(2+) serves as cofactor.

The protein localises to the cytoplasm. It catalyses the reaction tRNA(Ala) + L-alanine + ATP = L-alanyl-tRNA(Ala) + AMP + diphosphate. In terms of biological role, catalyzes the attachment of alanine to tRNA(Ala) in a two-step reaction: alanine is first activated by ATP to form Ala-AMP and then transferred to the acceptor end of tRNA(Ala). Also edits incorrectly charged Ser-tRNA(Ala) and Gly-tRNA(Ala) via its editing domain. This Saccharolobus islandicus (strain M.16.27) (Sulfolobus islandicus) protein is Alanine--tRNA ligase.